We begin with the raw amino-acid sequence, 331 residues long: Adenosine deaminase (331 aa).

Residues His12 and His14 each coordinate Zn(2+). Residues His14 and Asp16 each contribute to the substrate site. His197 serves as a coordination point for Zn(2+). Glu200 functions as the Proton donor in the catalytic mechanism. Zn(2+) is bound at residue Asp278.

It belongs to the metallo-dependent hydrolases superfamily. Adenosine and AMP deaminases family. Adenosine deaminase subfamily. Zn(2+) serves as cofactor.

It carries out the reaction adenosine + H2O + H(+) = inosine + NH4(+). It catalyses the reaction 2'-deoxyadenosine + H2O + H(+) = 2'-deoxyinosine + NH4(+). In terms of biological role, catalyzes the hydrolytic deamination of adenosine and 2-deoxyadenosine. The chain is Adenosine deaminase from Shewanella halifaxensis (strain HAW-EB4).